The following is a 176-amino-acid chain: Non-specific lipid transfer protein GPI-anchored 12 (176 aa).

A signal peptide spans 1-20 (MLTTNTLAVLLLLFLSLCSG). Cystine bridges form between Cys40-Cys83, Cys50-Cys67, Cys68-Cys110, and Cys81-Cys120. Asn46 carries N-linked (GlcNAc...) asparagine glycosylation. Asn149 is lipidated: GPI-anchor amidated asparagine. A propeptide spans 150–176 (GAMTTKYCGVALNSLALLLLFTFLSLS) (removed in mature form).

Belongs to the plant LTP family. As to expression, preferentially expressed in the endodermis of hypocotyls and roots of seedlings, and in petals and anthers of inflorescences. May also be expressed in siliques, carpels and pedicels.

It is found in the cell membrane. Functionally, probable lipid transfer protein. This Arabidopsis thaliana (Mouse-ear cress) protein is Non-specific lipid transfer protein GPI-anchored 12.